An 843-amino-acid chain; its full sequence is Lon protease (843 aa).

A compositionally biased stretch (basic and acidic residues) spans 1–16 (MRERKETAMSDKEKKG). The disordered stretch occupies residues 1-22 (MRERKETAMSDKEKKGAGAGAQ). One can recognise a Lon N-terminal domain in the interval 42–236 (LPILPLRNSV…LVLELLNRKR (195 aa)). 388 to 395 (GPPGVGKT) contributes to the ATP binding site. The Lon proteolytic domain occupies 627–808 (TEIAGVATGL…DEVLQAALEE (182 aa)). Residues S714 and K757 contribute to the active site. The segment at 805-843 (ALEENPVGRKPPAAPEPEGEKKPGATPTPPAKKPDEIRV) is disordered.

The protein belongs to the peptidase S16 family. Homohexamer. Organized in a ring with a central cavity.

Its subcellular location is the cytoplasm. It carries out the reaction Hydrolysis of proteins in presence of ATP.. ATP-dependent serine protease that mediates the selective degradation of mutant and abnormal proteins as well as certain short-lived regulatory proteins. Required for cellular homeostasis and for survival from DNA damage and developmental changes induced by stress. Degrades polypeptides processively to yield small peptide fragments that are 5 to 10 amino acids long. Binds to DNA in a double-stranded, site-specific manner. The sequence is that of Lon protease from Anaeromyxobacter dehalogenans (strain 2CP-C).